A 734-amino-acid chain; its full sequence is Photosystem I P700 chlorophyll a apoprotein A2 (734 aa).

The next 8 helical transmembrane spans lie at 46–69 (IFAS…FHVA), 135–158 (LYAG…LHLQ), 175–199 (LNHH…HVAI), 273–291 (IAHH…GHMY), 330–353 (LHFQ…QHMY), 369–395 (SALY…IFFV), 417–439 (AIIS…IYVH), and 517–535 (FLIH…LILV). The [4Fe-4S] cluster site is built by C559 and C568. 2 helical membrane-spanning segments follow: residues 575-596 (AFYL…YWHW) and 643-665 (LSVW…MFLI). Positions 654, 662, and 670 each coordinate chlorophyll a. Position 671 (W671) interacts with phylloquinone. Residues 707–727 (LVGLIHFTAGYIFTYAAFVIA) traverse the membrane as a helical segment.

Belongs to the PsaA/PsaB family. The PsaA/B heterodimer binds the P700 chlorophyll special pair and subsequent electron acceptors. PSI consists of a core antenna complex that captures photons, and an electron transfer chain that converts photonic excitation into a charge separation. The eukaryotic PSI reaction center is composed of at least 11 subunits. Requires P700 is a chlorophyll a/chlorophyll a' dimer, A0 is one or more chlorophyll a, A1 is one or both phylloquinones and FX is a shared 4Fe-4S iron-sulfur center. as cofactor.

Its subcellular location is the plastid. The protein localises to the chloroplast thylakoid membrane. The catalysed reaction is reduced [plastocyanin] + hnu + oxidized [2Fe-2S]-[ferredoxin] = oxidized [plastocyanin] + reduced [2Fe-2S]-[ferredoxin]. Functionally, psaA and PsaB bind P700, the primary electron donor of photosystem I (PSI), as well as the electron acceptors A0, A1 and FX. PSI is a plastocyanin/cytochrome c6-ferredoxin oxidoreductase, converting photonic excitation into a charge separation, which transfers an electron from the donor P700 chlorophyll pair to the spectroscopically characterized acceptors A0, A1, FX, FA and FB in turn. Oxidized P700 is reduced on the lumenal side of the thylakoid membrane by plastocyanin or cytochrome c6. In Rhodomonas salina (Cryptomonas salina), this protein is Photosystem I P700 chlorophyll a apoprotein A2.